The chain runs to 369 residues: Putative agmatine deiminase 2 (369 aa).

C356 (amidino-cysteine intermediate) is an active-site residue.

Belongs to the agmatine deiminase family.

The catalysed reaction is agmatine + H2O = N-carbamoylputrescine + NH4(+). This is Putative agmatine deiminase 2 from Listeria monocytogenes serovar 1/2a (strain ATCC BAA-679 / EGD-e).